A 645-amino-acid chain; its full sequence is 1,4-alpha-glucan branching enzyme GlgB (645 aa).

Asp309 acts as the Nucleophile in catalysis. The active-site Proton donor is Glu352. Positions 619–645 (VKTRKGSKKQDGSKTKVRSNVTSRGKR) are disordered. The segment covering 636–645 (RSNVTSRGKR) has biased composition (polar residues).

Belongs to the glycosyl hydrolase 13 family. GlgB subfamily. Monomer.

It catalyses the reaction Transfers a segment of a (1-&gt;4)-alpha-D-glucan chain to a primary hydroxy group in a similar glucan chain.. The protein operates within glycan biosynthesis; glycogen biosynthesis. In terms of biological role, catalyzes the formation of the alpha-1,6-glucosidic linkages in glycogen by scission of a 1,4-alpha-linked oligosaccharide from growing alpha-1,4-glucan chains and the subsequent attachment of the oligosaccharide to the alpha-1,6 position. The chain is 1,4-alpha-glucan branching enzyme GlgB from Bacillus cereus (strain AH820).